A 253-amino-acid chain; its full sequence is MKFNIVSPVALSCLFFLFLTGTLAQNAGSIVTRELFEQMLSFRNNDACPAKGFYTYDAFIAAANSFPGFGTAGDDTARKKEIAAFFGQTSHETNGGSAGTFTGGYCFVKQIEQSDRYYGRGPIQLTHQSNYERAGQGIGVGQELVNNPDLVATDPIISFKTAIWFWMTEQDNKPSCHNVIIGQWTPSPKDTAANRVPGYGVITNIINGQFECGMGPNTAAESRIGFYRRYCGMLNVPTGENLDCNNQKNFAQG.

The first 24 residues, 1–24 (MKFNIVSPVALSCLFFLFLTGTLA), serve as a signal peptide directing secretion. The active-site Proton donor is the Glu-92. The cysteines at positions 212 and 244 are disulfide-linked.

This sequence belongs to the glycosyl hydrolase 19 family. Chitinase class II subfamily.

It is found in the secreted. It localises to the extracellular space. It catalyses the reaction Random endo-hydrolysis of N-acetyl-beta-D-glucosaminide (1-&gt;4)-beta-linkages in chitin and chitodextrins.. Defense against chitin-containing fungal pathogens. This chain is Acidic 26 kDa endochitinase (CHI3), found in Solanum lycopersicum (Tomato).